A 271-amino-acid polypeptide reads, in one-letter code: Murein DD-endopeptidase MepH (271 aa).

The first 27 residues, 1–27 (MARINRISITLCALLFTTLPLTPMAHA), serve as a signal peptide directing secretion. The disordered stretch occupies residues 27 to 102 (ASKQARESSA…KHAVNKTASA (76 aa)). Basic residues predominate over residues 55–64 (KTQKTAKKAA). The segment covering 65-86 (SKSTTKSKTASSVKKSSITASK) has biased composition (low complexity). Residues 138 to 265 (QKATKVAMNK…RHYVGARRVM (128 aa)) enclose the NlpC/P60 domain. Catalysis depends on Cys169, which acts as the Nucleophile. Residue His224 is the Proton acceptor of the active site. Gln236 is a catalytic residue.

This sequence belongs to the peptidase C40 family.

Its pathway is cell wall biogenesis; cell wall polysaccharide biosynthesis. A murein DD-endopeptidase with specificity for D-Ala-meso-diaminopimelic acid (mDAP) cross-links. Its role is probably to cleave D-Ala-mDAP cross-links to allow insertion of new glycans and thus cell wall expansion. Functionally redundant with MepM and MepH. Partially suppresses an mepS disruption mutant. The sequence is that of Murein DD-endopeptidase MepH (mepH) from Escherichia coli (strain K12).